The sequence spans 283 residues: Pantothenate synthetase (283 aa).

Position 30–37 (30–37 (MGNLHDGH)) interacts with ATP. His-37 (proton donor) is an active-site residue. Gln-61 contacts (R)-pantoate. Gln-61 provides a ligand contact to beta-alanine. ATP is bound at residue 149 to 152 (GEKD). Gln-155 is a binding site for (R)-pantoate. 186 to 189 (LSSR) contributes to the ATP binding site.

This sequence belongs to the pantothenate synthetase family. As to quaternary structure, homodimer.

Its subcellular location is the cytoplasm. It carries out the reaction (R)-pantoate + beta-alanine + ATP = (R)-pantothenate + AMP + diphosphate + H(+). The protein operates within cofactor biosynthesis; (R)-pantothenate biosynthesis; (R)-pantothenate from (R)-pantoate and beta-alanine: step 1/1. In terms of biological role, catalyzes the condensation of pantoate with beta-alanine in an ATP-dependent reaction via a pantoyl-adenylate intermediate. This Escherichia coli O127:H6 (strain E2348/69 / EPEC) protein is Pantothenate synthetase.